Here is a 488-residue protein sequence, read N- to C-terminus: Envelope glycoprotein gp62 (488 aa).

A signal peptide spans 1-20 (MGKFLATLILFFQFCPLIFG). The Extracellular segment spans residues 21-442 (DYSPSCCTLT…LGLSQWAREA (422 aa)). N140 and N222 each carry an N-linked (GlcNAc...) asparagine; by host glycan. The CXXC motif lies at 225 to 228 (CIVC). N-linked (GlcNAc...) asparagine; by host glycans are attached at residues N244 and N272. The tract at residues 313–333 (AVPVAVWLVSALAMGAGVAGG) is fusion peptide. Coiled coils occupy residues 341 to 387 (ASGK…LLFW) and 397 to 429 (QEQC…GWGL). The tract at residues 376-392 (AQNRRGLDLLFWEQGGL) is immunosuppression. C393 and C400 are joined by a disulfide. N404 is a glycosylation site (N-linked (GlcNAc...) asparagine; by host). Residues 443 to 463 (LQTGITLVALLLLVILAGPCI) traverse the membrane as a helical segment. C462 carries S-palmitoyl cysteine; by host lipidation. Residues 464 to 488 (LRQLRHLPSRVRYPHYSLIKPESSL) are Cytoplasmic-facing.

The mature envelope protein (Env) consists of a trimer of SU-TM heterodimers attached by non-covalent interactions or by a labile interchain disulfide bond. Post-translationally, specific enzymatic cleavages in vivo yield mature proteins. Envelope glycoproteins are synthesized as an inactive precursor that is N-glycosylated and processed likely by host cell furin or by a furin-like protease in the Golgi to yield the mature SU and TM proteins. The cleavage site between SU and TM requires the minimal sequence [KR]-X-[KR]-R. The transmembrane protein is palmitoylated.

The protein resides in the virion membrane. The protein localises to the host cell membrane. The surface protein (SU) attaches the virus to the host cell by binding to its receptor. This interaction triggers the refolding of the transmembrane protein (TM) and is thought to activate its fusogenic potential by unmasking its fusion peptide. Fusion occurs at the host cell plasma membrane. In terms of biological role, the transmembrane protein (TM) acts as a class I viral fusion protein. Under the current model, the protein has at least 3 conformational states: pre-fusion native state, pre-hairpin intermediate state, and post-fusion hairpin state. During viral and target cell membrane fusion, the coiled coil regions (heptad repeats) assume a trimer-of-hairpins structure, positioning the fusion peptide in close proximity to the C-terminal region of the ectodomain. The formation of this structure appears to drive apposition and subsequent fusion of viral and target cell membranes. Membranes fusion leads to delivery of the nucleocapsid into the cytoplasm. In Homo sapiens (Human), this protein is Envelope glycoprotein gp62 (env).